The following is a 365-amino-acid chain: 3-isopropylmalate dehydrogenase (365 aa).

Substrate contacts are provided by Arg-96, Arg-106, Arg-134, and Asp-224. 3 residues coordinate Mg(2+): Asp-224, Asp-248, and Asp-252. 288-300 (GSAPTIAKQNIAN) contributes to the NAD(+) binding site.

This sequence belongs to the isocitrate and isopropylmalate dehydrogenases family. LeuB type 1 subfamily. As to quaternary structure, homodimer. The cofactor is Mg(2+). Mn(2+) serves as cofactor.

It is found in the cytoplasm. It carries out the reaction (2R,3S)-3-isopropylmalate + NAD(+) = 4-methyl-2-oxopentanoate + CO2 + NADH. The protein operates within amino-acid biosynthesis; L-leucine biosynthesis; L-leucine from 3-methyl-2-oxobutanoate: step 3/4. Its function is as follows. Catalyzes the oxidation of 3-carboxy-2-hydroxy-4-methylpentanoate (3-isopropylmalate) to 3-carboxy-4-methyl-2-oxopentanoate. The product decarboxylates to 4-methyl-2 oxopentanoate. The protein is 3-isopropylmalate dehydrogenase of Dehalococcoides mccartyi (strain CBDB1).